A 512-amino-acid chain; its full sequence is Cytochrome P450 98A1 (512 aa).

A helical membrane pass occupies residues A3–L23. Residue C441 participates in heme binding.

Belongs to the cytochrome P450 family. Requires heme as cofactor.

Its subcellular location is the membrane. The protein is Cytochrome P450 98A1 (CYP98A1) of Sorghum bicolor (Sorghum).